Here is a 318-residue protein sequence, read N- to C-terminus: Methionyl-tRNA formyltransferase (318 aa).

Ser-110–Pro-113 lines the (6S)-5,6,7,8-tetrahydrofolate pocket.

It belongs to the Fmt family.

The enzyme catalyses L-methionyl-tRNA(fMet) + (6R)-10-formyltetrahydrofolate = N-formyl-L-methionyl-tRNA(fMet) + (6S)-5,6,7,8-tetrahydrofolate + H(+). Attaches a formyl group to the free amino group of methionyl-tRNA(fMet). The formyl group appears to play a dual role in the initiator identity of N-formylmethionyl-tRNA by promoting its recognition by IF2 and preventing the misappropriation of this tRNA by the elongation apparatus. The chain is Methionyl-tRNA formyltransferase from Geobacillus sp. (strain WCH70).